The primary structure comprises 297 residues: CASP-like protein 2U8 (297 aa).

Residues 1–10 (MLELYEKRRA) lie on the Cytoplasmic side of the membrane. Residues 11 to 31 (LLLLRLAAMFLSLAALLITVL) form a helical membrane-spanning segment. The Extracellular segment spans residues 32 to 64 (NREDGFFSINVFGSPQPILAKATADFTLVKGLK). The helical transmembrane segment at 65–85 (FFAGAMGIVAGYSFLQLAIAM) threads the bilayer. The Cytoplasmic portion of the chain corresponds to 86–101 (ASIFSGAPSILGGKRM). A helical transmembrane segment spans residues 102–122 (AWLCFVGDMTASHLCAAAAAV). Topologically, residues 123–148 (SAQLAYLGKRGAPMWSAVCTYFSHYC) are extracellular. Residues 149–169 (LVFGLAVILAFLATLAALLVA) form a helical membrane-spanning segment. The Cytoplasmic segment spans residues 170-297 (SISSYHLAYD…RVLEMETPCK (128 aa)).

Belongs to the Casparian strip membrane proteins (CASP) family. In terms of assembly, homodimer and heterodimers.

Its subcellular location is the cell membrane. The protein is CASP-like protein 2U8 of Selaginella moellendorffii (Spikemoss).